The sequence spans 174 residues: Small ribosomal subunit protein uS4 (174 aa).

The S4 RNA-binding domain maps to arginine 105 to glutamate 169.

The protein belongs to the universal ribosomal protein uS4 family. Part of the 30S ribosomal subunit. Contacts protein S5. The interaction surface between S4 and S5 is involved in control of translational fidelity.

In terms of biological role, one of the primary rRNA binding proteins, it binds directly to 16S rRNA where it nucleates assembly of the body of the 30S subunit. With S5 and S12 plays an important role in translational accuracy. This chain is Small ribosomal subunit protein uS4, found in Natronomonas pharaonis (strain ATCC 35678 / DSM 2160 / CIP 103997 / JCM 8858 / NBRC 14720 / NCIMB 2260 / Gabara) (Halobacterium pharaonis).